The primary structure comprises 371 residues: uncharacterized protein (371 aa).

The protein belongs to the glycerate kinase type-1 family.

This is an uncharacterized protein from Synechocystis sp. (strain ATCC 27184 / PCC 6803 / Kazusa).